We begin with the raw amino-acid sequence, 88 residues long: ATP synthase subunit c (88 aa).

The next 2 helical transmembrane spans lie at 10–30 (ILAASAIGAGLAMIAGLGPGI) and 68–88 (GIYSLVIALILLFANPLIRLL).

It belongs to the ATPase C chain family. As to quaternary structure, F-type ATPases have 2 components, F(1) - the catalytic core - and F(0) - the membrane proton channel. F(1) has five subunits: alpha(3), beta(3), gamma(1), delta(1), epsilon(1). F(0) has three main subunits: a(1), b(2) and c(10-14). The alpha and beta chains form an alternating ring which encloses part of the gamma chain. F(1) is attached to F(0) by a central stalk formed by the gamma and epsilon chains, while a peripheral stalk is formed by the delta and b chains.

The protein localises to the cell membrane. Functionally, f(1)F(0) ATP synthase produces ATP from ADP in the presence of a proton or sodium gradient. F-type ATPases consist of two structural domains, F(1) containing the extramembraneous catalytic core and F(0) containing the membrane proton channel, linked together by a central stalk and a peripheral stalk. During catalysis, ATP synthesis in the catalytic domain of F(1) is coupled via a rotary mechanism of the central stalk subunits to proton translocation. Key component of the F(0) channel; it plays a direct role in translocation across the membrane. A homomeric c-ring of between 10-14 subunits forms the central stalk rotor element with the F(1) delta and epsilon subunits. This chain is ATP synthase subunit c, found in Alkaliphilus oremlandii (strain OhILAs) (Clostridium oremlandii (strain OhILAs)).